The sequence spans 431 residues: MKYQRPKGTADILPSESAKWQYVEEKARELFKKYRYEEMRTPIFESFEVFSRTSGETSDIVTKEMYDFYDKGDRHITLRPEGTAGVVRSFVENKLYGPEVQKPFKTYYMGPMFRYERPQSGRLREFHQIGVEAFGVDNPTLDVEVMAMAVDLLKSFGLNSLRVAVNTLGDLETRNNYRQALIDYLEPFEAELSDDSKERLHKNPLRVLDSKDEKDKEIVANAPSILDYLTEDAQKHFETVKSLLNDLGIEYVIDSNMVRGLDYYNHTIFEIMSDSKAFNGKWTTVCAGGHYSGLVEQLGGPQTPGVGFGLGVERLLLILDAEEDTLPIENPLDVYVVGIGDVTNAVTLKLVQNLRHQGFTADRDYLNRKPKGQFKSANRLNARFTLTIGETELQEQEANLKFMKNGNEISVKLADVENDFASLEKLAVEGE.

This sequence belongs to the class-II aminoacyl-tRNA synthetase family. As to quaternary structure, homodimer.

The protein resides in the cytoplasm. It catalyses the reaction tRNA(His) + L-histidine + ATP = L-histidyl-tRNA(His) + AMP + diphosphate + H(+). This chain is Histidine--tRNA ligase, found in Ligilactobacillus salivarius (strain UCC118) (Lactobacillus salivarius).